Reading from the N-terminus, the 324-residue chain is Beta-ketoacyl-[acyl-carrier-protein] synthase III (324 aa).

Catalysis depends on residues Cys-114 and His-251. Residues 252-256 (QANRR) form an ACP-binding region. The active site involves Asn-281.

It belongs to the thiolase-like superfamily. FabH family. As to quaternary structure, homodimer.

The protein resides in the cytoplasm. The catalysed reaction is malonyl-[ACP] + acetyl-CoA + H(+) = 3-oxobutanoyl-[ACP] + CO2 + CoA. It participates in lipid metabolism; fatty acid biosynthesis. Catalyzes the condensation reaction of fatty acid synthesis by the addition to an acyl acceptor of two carbons from malonyl-ACP. Catalyzes the first condensation reaction which initiates fatty acid synthesis and may therefore play a role in governing the total rate of fatty acid production. Possesses both acetoacetyl-ACP synthase and acetyl transacylase activities. Its substrate specificity determines the biosynthesis of branched-chain and/or straight-chain of fatty acids. In Paramagnetospirillum magneticum (strain ATCC 700264 / AMB-1) (Magnetospirillum magneticum), this protein is Beta-ketoacyl-[acyl-carrier-protein] synthase III.